Here is a 204-residue protein sequence, read N- to C-terminus: MFMDSRETLCENPVIITDRDAWKEINLKDAGTIEVEIGFGSGEYLLRRASEYPERLFIGIEKKPGMITEVSKRVASHNLNNIRLLESCAKDAFADLFPANSISRVYSLFPDPWPKRKHLHYRLFSSEYLRLLNNRLIFGSEALIVTDSEDYCNWMLKQLPDTGFEVENSIIPPQFDTRFERKWLEQNFNTFFRILLKKARHIET.

The S-adenosyl-L-methionine site is built by Glu36, Glu61, and Asp111. The active site involves Asp111. Substrate-binding positions include Lys115, Asp147, and 177–180; that span reads TRFE.

Belongs to the class I-like SAM-binding methyltransferase superfamily. TrmB family.

It carries out the reaction guanosine(46) in tRNA + S-adenosyl-L-methionine = N(7)-methylguanosine(46) in tRNA + S-adenosyl-L-homocysteine. The protein operates within tRNA modification; N(7)-methylguanine-tRNA biosynthesis. In terms of biological role, catalyzes the formation of N(7)-methylguanine at position 46 (m7G46) in tRNA. The protein is tRNA (guanine-N(7)-)-methyltransferase of Chlorobium phaeobacteroides (strain DSM 266 / SMG 266 / 2430).